We begin with the raw amino-acid sequence, 919 residues long: MTAPWRRLRSLVWEYWAGLLVCAFWIPDSRGMPHVIRIGGIFEYADGPNAQVMNAEEHAFRFSANIINRNRTLLPNTTLTYDIQRIHFHDSFEATKKACDQLALGVVAIFGPSQGSCTNAVQSICNALEVPHIQLRWKHHPLDNKDTFYVNLYPDYASLSHAILDLVQYLKWRSATVVYDDSTGLIRLQELIMAPSRYNIRLKIRQLPIDSDDSRPLLKEMKRGREFRIIFDCSHTMAAQILKQAMAMGMMTEYYHFIFTTLDLYALDLEPYRYSGVNLTGFRILNVDNPHVSAIVEKWSMERLQAAPRSESGLLDGVMMTDAALLYDAVHIVSVCYQRAPQMTVNSLQCHRHKAWRFGGRFMNFIKEAQWEGLTGRIVFNKTSGLRTDFDLDIISLKEDGLEKVGVWSPADGLNITEVAKGRGPNVTDSLTNRSLIVTTVLEEPFVMFRKSDRTLYGNDRFEGYCIDLLKELAHILGFSYEIRLVEDGKYGAQDDKGQWNGMVKELIDHKADLAVAPLTITHVREKAIDFSKPFMTLGVSILYRKPNGTNPSVFSFLNPLSPDIWMYVLLAYLGVSCVLFVIARFSPYEWYDAHPCNPGSEVVENNFTLLNSFWFGMGSLMQQGSELMPKALSTRIIGGIWWFFTLIIISSYTANLAAFLTVERMESPIDSADDLAKQTKIEYGAVKDGATMTFFKKSKISTFEKMWAFMSSKPSALVKNNEEGIQRALTADYALLMESTTIEYVTQRNCNLTQIGGLIDSKGYGIGTPMGSPYRDKITIAILQLQEEDKLHIMKEKWWRGSGCPEEENKEASALGIQKIGGIFIVLAAGLVLSVLVAVGEFVYKLRKTAEREQRSFCSTVADEIRFSLTCQRRVKHKPQPPMMVKTDAVINMHTFNDRRLPGKDSMACSTSLAPVFP.

The N-terminal stretch at 1–31 (MTAPWRRLRSLVWEYWAGLLVCAFWIPDSRG) is a signal peptide. Residues 32–563 (MPHVIRIGGI…VFSFLNPLSP (532 aa)) lie on the Extracellular side of the membrane. N-linked (GlcNAc...) asparagine glycosylation is found at N70, N76, N278, N381, N415, N426, and N433. C99 and C350 form a disulfide bridge. The L-glutamate site is built by P518, T520, and R525. N-linked (GlcNAc...) asparagine glycosylation is found at N548 and N551. The helical transmembrane segment at 564-584 (DIWMYVLLAYLGVSCVLFVIA) threads the bilayer. Topologically, residues 585-636 (RFSPYEWYDAHPCNPGSEVVENNFTLLNSFWFGMGSLMQQGSELMPKALSTR) are cytoplasmic. Residues 637 to 657 (IIGGIWWFFTLIIISSYTANL) traverse the membrane as a helical segment. Topologically, residues 658–820 (AAFLTVERME…KEASALGIQK (163 aa)) are extracellular. A691, T692, and E739 together coordinate L-glutamate. Residue N752 is glycosylated (N-linked (GlcNAc...) asparagine). A helical membrane pass occupies residues 821 to 841 (IGGIFIVLAAGLVLSVLVAVG). The Cytoplasmic segment spans residues 842–919 (EFVYKLRKTA…CSTSLAPVFP (78 aa)). S869 carries the post-translational modification Phosphoserine. Residue K887 forms a Glycyl lysine isopeptide (Lys-Gly) (interchain with G-Cter in SUMO1) linkage.

It belongs to the glutamate-gated ion channel (TC 1.A.10.1) family. GRIK3 subfamily. As to quaternary structure, homotetramer, and heterotetramer with either GRIK4 or GRIK5. Can form functional heteromeric receptors with GRIK2. Interacts with PRKCABP. Interacts with NETO2.

It localises to the cell membrane. It is found in the postsynaptic cell membrane. It carries out the reaction Ca(2+)(in) = Ca(2+)(out). Ionotropic glutamate receptor that functions as a cation-permeable ligand-gated ion channel, gated by L-glutamate and the glutamatergic agonist kainic acid. Binding of the excitatory neurotransmitter L-glutamate induces a conformation change, leading to the opening of the cation channel, and thereby converts the chemical signal to an electrical impulse. The receptor then desensitizes rapidly and enters a transient inactive state, characterized by the presence of bound agonist. In association with GRIK2, involved in presynaptic facilitation of glutamate release at hippocampal mossy fiber synapses. The chain is Glutamate receptor ionotropic, kainate 3 (GRIK3) from Homo sapiens (Human).